We begin with the raw amino-acid sequence, 308 residues long: Ribosomal RNA small subunit methyltransferase H (308 aa).

S-adenosyl-L-methionine-binding positions include 32–34 (AGH), Asp-52, Phe-79, Asp-100, and Gln-107.

This sequence belongs to the methyltransferase superfamily. RsmH family.

It localises to the cytoplasm. It carries out the reaction cytidine(1402) in 16S rRNA + S-adenosyl-L-methionine = N(4)-methylcytidine(1402) in 16S rRNA + S-adenosyl-L-homocysteine + H(+). Functionally, specifically methylates the N4 position of cytidine in position 1402 (C1402) of 16S rRNA. The protein is Ribosomal RNA small subunit methyltransferase H of Mycoplasma mycoides subsp. mycoides SC (strain CCUG 32753 / NCTC 10114 / PG1).